The primary structure comprises 199 residues: Peroxiredoxin-1 (199 aa).

At Ser2 the chain carries N-acetylserine. Residues 6 to 165 (AKIGHPAPNF…TLRLVQAFQF (160 aa)) enclose the Thioredoxin domain. Lys7 is subject to N6-acetyllysine; alternate. Lys7 is covalently cross-linked (Glycyl lysine isopeptide (Lys-Gly) (interchain with G-Cter in SUMO2); alternate). N6-acetyllysine occurs at positions 16 and 27. Residue Ser32 is modified to Phosphoserine. The residue at position 35 (Lys35) is an N6-acetyllysine; alternate. The residue at position 35 (Lys35) is an N6-succinyllysine; alternate. Cys52 acts as the Cysteine sulfenic acid (-SOH) intermediate in catalysis. Thr90 is modified (phosphothreonine; by CDK1). Residue Lys120 forms a Glycyl lysine isopeptide (Lys-Gly) (interchain with G-Cter in SUMO2) linkage. The residue at position 136 (Lys136) is an N6-acetyllysine. Residues 176 to 199 (GWKPGSDTIKPDVQKSKEYFSKQK) form a disordered region. The segment covering 184 to 199 (IKPDVQKSKEYFSKQK) has biased composition (basic and acidic residues). Residue Lys185 forms a Glycyl lysine isopeptide (Lys-Gly) (interchain with G-Cter in SUMO1) linkage. Lys197 is subject to N6-acetyllysine.

It belongs to the peroxiredoxin family. AhpC/Prx1 subfamily. Homodimer; disulfide-linked, upon oxidation. 5 homodimers assemble to form a ring-like decamer. Interacts with GDPD5; forms a mixed-disulfide with GDPD5. Interacts with SESN1 and SESN2. Interacts with FAM107A. Post-translationally, phosphorylated on Thr-90 during the M-phase, which leads to a more than 80% decrease in enzymatic activity. Acetylation increases reducing activity and resistance to superoxidation. Deacetylated by HDAC6 which decreases reducing activity. In terms of processing, the enzyme can be inactivated by further oxidation of the cysteine sulfenic acid (C(P)-SOH) to sulphinic acid (C(P)-SO2H) instead of its condensation to a disulfide bond. It can be reactivated by forming a transient disulfide bond with sulfiredoxin SRXN1, which reduces the cysteine sulfinic acid in an ATP- and Mg-dependent manner.

Its subcellular location is the cytoplasm. It localises to the melanosome. It carries out the reaction a hydroperoxide + [thioredoxin]-dithiol = an alcohol + [thioredoxin]-disulfide + H2O. Functionally, thiol-specific peroxidase that catalyzes the reduction of hydrogen peroxide and organic hydroperoxides to water and alcohols, respectively. Plays a role in cell protection against oxidative stress by detoxifying peroxides and as sensor of hydrogen peroxide-mediated signaling events. Might participate in the signaling cascades of growth factors and tumor necrosis factor-alpha by regulating the intracellular concentrations of H(2)O(2). Reduces an intramolecular disulfide bond in GDPD5 that gates the ability to GDPD5 to drive postmitotic motor neuron differentiation. This Homo sapiens (Human) protein is Peroxiredoxin-1 (PRDX1).